The chain runs to 1109 residues: Coiled-coil domain-containing protein 158 (1109 aa).

Basic and acidic residues predominate over residues 1-12; sequence MESKACESKNED. The interval 1–31 is disordered; that stretch reads MESKACESKNEDLLPSGITSKGGSSSPFFVT. Residues 17 to 31 are compositionally biased toward polar residues; that stretch reads GITSKGGSSSPFFVT. 2 coiled-coil regions span residues 71–166 and 242–828; these read GKEH…MLKD and VEDQ…QEQE. Disordered stretches follow at residues 843–897 and 952–1061; these read LQGP…DPTR and HRSN…TGKT. Composition is skewed to polar residues over residues 862-882, 953-970, and 988-998; these read ASVTRSHSNIPSSQSTTSFLS, RSNNSLRESTEGSKSSET, and SCFTFTSTASP. The segment covering 999–1019 has biased composition (low complexity); the sequence is SGKMSASRSFSSSPKKSPVHS. 2 stretches are compositionally biased toward polar residues: residues 1020–1037 and 1043–1061; these read LLTSSAEESVNSTPQYRS and SPTSAKDSQSPSLETTGKT. The stretch at 1053–1109 forms a coiled coil; that stretch reads PSLETTGKTCQKLQNRLESLQTLVEDLQLKNQAMSSMIRNQEKRIQKVKDQEKMLLK.

In Mus musculus (Mouse), this protein is Coiled-coil domain-containing protein 158 (Ccdc158).